Here is a 240-residue protein sequence, read N- to C-terminus: Cysteine-rich venom protein ablomin (240 aa).

Residues 1–19 (MIVFIVLPILAAVLQQSSG) form the signal peptide. The region spanning 38-166 (VDLHNSLRRS…EYSYFYVCQY (129 aa)) is the SCP domain. Cystine bridges form between Cys75–Cys153, Cys92–Cys167, Cys148–Cys164, Cys186–Cys193, Cys189–Cys198, Cys202–Cys235, Cys211–Cys229, and Cys220–Cys233. One can recognise a ShKT domain in the interval 202 to 235 (CTQEDVFTNCNSLVQQSNCQHNYIKTNCPASCFC).

It belongs to the CRISP family. In terms of tissue distribution, expressed by the venom gland.

It localises to the secreted. Functionally, blocks contraction of smooth muscle elicited by high potassium-induced depolarization, but does not block caffeine-stimulated contraction. Since high potassium-treatment activates voltage-gated channels and caffeine exposure activates ryanodine receptors, this toxin may target L-type voltage-gated calcium channels (Cav) (and not ryanodine receptors) on smooth muscle. This toxin also shows a little inhibition on cyclic nucleotide-gated CNGA1 channel. The polypeptide is Cysteine-rich venom protein ablomin (Gloydius blomhoffii (Mamushi)).